A 155-amino-acid chain; its full sequence is 3-hydroxyacyl-[acyl-carrier-protein] dehydratase FabZ (155 aa).

His57 is a catalytic residue.

This sequence belongs to the thioester dehydratase family. FabZ subfamily.

Its subcellular location is the cytoplasm. It carries out the reaction a (3R)-hydroxyacyl-[ACP] = a (2E)-enoyl-[ACP] + H2O. Involved in unsaturated fatty acids biosynthesis. Catalyzes the dehydration of short chain beta-hydroxyacyl-ACPs and long chain saturated and unsaturated beta-hydroxyacyl-ACPs. The chain is 3-hydroxyacyl-[acyl-carrier-protein] dehydratase FabZ from Sorangium cellulosum (strain So ce56) (Polyangium cellulosum (strain So ce56)).